Reading from the N-terminus, the 215-residue chain is Cytochrome b6 (215 aa).

The helical transmembrane segment at 32-52 threads the bilayer; the sequence is IFYCLGGITLTCFLIQFATGF. Residue Cys35 coordinates heme c. The heme b site is built by His86 and His100. The next 3 helical transmembrane spans lie at 90–110, 116–136, and 186–206; these read ASMMVLMMILHVFRVYLTGGF, LTWVTGVVLAVITVSFGVTGY, and LHTFVLPWSIAVFMLMHFLMI. Heme b-binding residues include His187 and His202.

This sequence belongs to the cytochrome b family. PetB subfamily. The 4 large subunits of the cytochrome b6-f complex are cytochrome b6, subunit IV (17 kDa polypeptide, PetD), cytochrome f and the Rieske protein, while the 4 small subunits are PetG, PetL, PetM and PetN. The complex functions as a dimer. Requires heme b as cofactor. The cofactor is heme c.

The protein resides in the cellular thylakoid membrane. In terms of biological role, component of the cytochrome b6-f complex, which mediates electron transfer between photosystem II (PSII) and photosystem I (PSI), cyclic electron flow around PSI, and state transitions. This is Cytochrome b6 from Synechococcus elongatus.